Consider the following 364-residue polypeptide: Aminomethyltransferase (364 aa).

It belongs to the GcvT family. As to quaternary structure, the glycine cleavage system is composed of four proteins: P, T, L and H.

It carries out the reaction N(6)-[(R)-S(8)-aminomethyldihydrolipoyl]-L-lysyl-[protein] + (6S)-5,6,7,8-tetrahydrofolate = N(6)-[(R)-dihydrolipoyl]-L-lysyl-[protein] + (6R)-5,10-methylene-5,6,7,8-tetrahydrofolate + NH4(+). The glycine cleavage system catalyzes the degradation of glycine. In Geobacillus kaustophilus (strain HTA426), this protein is Aminomethyltransferase.